The sequence spans 338 residues: MTKKYNIAVIGATGNVGRETLNILAERNFPINKVYAIASDSSLGREVSFGEKILQINSLKSLHFDDIDIAFFCAGSEVSKEFIPKATASNCVVIDKSSLFRVDNQVPLIVPEVNLSTLKEFNTKNIIANPNCIVIPLAVALKPLDNEIKIKRVVISTYQSVSGAGKAGMDELYDQTKSKYVFGENDPKKFPKQIAFNIFPHIGDLNKDGYTSEEAKIASELNKIIGNHFKASVTSVRVPVFIGHSISVNIEFNDKIDAKEVEEILQDADGIVTISNNNYLAYISPVEVVGEDAVYVSRIRNDVSRDNTINLWITCDNLRKGAALNSVQIAEELINNYL.

Residues 13 to 16 (TGNV) and 41 to 42 (SS) contribute to the NADP(+) site. Arg-101 serves as a coordination point for phosphate. Catalysis depends on Cys-132, which acts as the Acyl-thioester intermediate. A substrate-binding site is contributed by Gln-159. NADP(+) is bound by residues 162-163 (SG) and Pro-187. Lys-216 contributes to the phosphate binding site. A substrate-binding site is contributed by Arg-237. His-244 serves as the catalytic Proton acceptor. Position 317 (Asn-317) interacts with NADP(+).

This sequence belongs to the aspartate-semialdehyde dehydrogenase family. As to quaternary structure, homodimer.

The catalysed reaction is L-aspartate 4-semialdehyde + phosphate + NADP(+) = 4-phospho-L-aspartate + NADPH + H(+). It functions in the pathway amino-acid biosynthesis; L-lysine biosynthesis via DAP pathway; (S)-tetrahydrodipicolinate from L-aspartate: step 2/4. It participates in amino-acid biosynthesis; L-methionine biosynthesis via de novo pathway; L-homoserine from L-aspartate: step 2/3. The protein operates within amino-acid biosynthesis; L-threonine biosynthesis; L-threonine from L-aspartate: step 2/5. Functionally, catalyzes the NADPH-dependent formation of L-aspartate-semialdehyde (L-ASA) by the reductive dephosphorylation of L-aspartyl-4-phosphate. The sequence is that of Aspartate-semialdehyde dehydrogenase from Rickettsia conorii (strain ATCC VR-613 / Malish 7).